The chain runs to 663 residues: UvrABC system protein B (663 aa).

A Helicase ATP-binding domain is found at 31-271 (DNIEGGEKAQ…EASIAKIQAE (241 aa)). 44–51 (GATGTGKT) is a binding site for ATP. The Beta-hairpin motif lies at 97–120 (YYDYYQPEAYVPSSDTYIEKDSSV). A Helicase C-terminal domain is found at 435-601 (QMDDLLGEIN…TIKKEIRDLI (167 aa)). One can recognise a UVR domain in the interval 627 to 662 (QEAIKKLQKQMHEAAELLDFELAAQIRDMVLELKSM).

It belongs to the UvrB family. In terms of assembly, forms a heterotetramer with UvrA during the search for lesions. Interacts with UvrC in an incision complex.

It is found in the cytoplasm. In terms of biological role, the UvrABC repair system catalyzes the recognition and processing of DNA lesions. A damage recognition complex composed of 2 UvrA and 2 UvrB subunits scans DNA for abnormalities. Upon binding of the UvrA(2)B(2) complex to a putative damaged site, the DNA wraps around one UvrB monomer. DNA wrap is dependent on ATP binding by UvrB and probably causes local melting of the DNA helix, facilitating insertion of UvrB beta-hairpin between the DNA strands. Then UvrB probes one DNA strand for the presence of a lesion. If a lesion is found the UvrA subunits dissociate and the UvrB-DNA preincision complex is formed. This complex is subsequently bound by UvrC and the second UvrB is released. If no lesion is found, the DNA wraps around the other UvrB subunit that will check the other stand for damage. This Streptococcus uberis (strain ATCC BAA-854 / 0140J) protein is UvrABC system protein B.